Reading from the N-terminus, the 229-residue chain is Biosynthetic peptidoglycan transglycosylase (229 aa).

The chain crosses the membrane as a helical span at residues 11–31 (NLLLALFLVLVAGPVVAVILY).

This sequence belongs to the glycosyltransferase 51 family.

The protein localises to the cell inner membrane. It carries out the reaction [GlcNAc-(1-&gt;4)-Mur2Ac(oyl-L-Ala-gamma-D-Glu-L-Lys-D-Ala-D-Ala)](n)-di-trans,octa-cis-undecaprenyl diphosphate + beta-D-GlcNAc-(1-&gt;4)-Mur2Ac(oyl-L-Ala-gamma-D-Glu-L-Lys-D-Ala-D-Ala)-di-trans,octa-cis-undecaprenyl diphosphate = [GlcNAc-(1-&gt;4)-Mur2Ac(oyl-L-Ala-gamma-D-Glu-L-Lys-D-Ala-D-Ala)](n+1)-di-trans,octa-cis-undecaprenyl diphosphate + di-trans,octa-cis-undecaprenyl diphosphate + H(+). The protein operates within cell wall biogenesis; peptidoglycan biosynthesis. Functionally, peptidoglycan polymerase that catalyzes glycan chain elongation from lipid-linked precursors. This chain is Biosynthetic peptidoglycan transglycosylase, found in Caulobacter vibrioides (strain ATCC 19089 / CIP 103742 / CB 15) (Caulobacter crescentus).